Consider the following 1285-residue polypeptide: Period circadian protein homolog 1 (1285 aa).

The tract at residues 1 to 134 (MSGPLEGADG…SSEQSARART (134 aa)) is disordered. Residues 1 to 151 (MSGPLEGADG…LRELKLRLPP (151 aa)) form an interaction with BTRC region. Low complexity-rich tracts occupy residues 48 to 57 (NSNGSSGNES) and 64 to 115 (GASQ…ASSE). Over residues 116 to 132 (QDNPSTSGCSSEQSARA) the composition is skewed to polar residues. Thr121 is subject to Phosphothreonine; by CSNK1E. 2 positions are modified to phosphoserine; by CSNK1E: Ser122 and Ser126. Residues 138-147 (LMTALRELKL) carry the Nuclear export signal 1 motif. PAS domains follow at residues 208 to 275 (ITSE…PFRL) and 348 to 414 (YEAP…KILQ). The 44-residue stretch at 422–465 (HSPIRFCARNGEYVTMDTSWAGFVHPWSRKVAFVLGRHKVRTAP) folds into the PAC domain. A Nuclear export signal 2 motif is present at residues 489-498 (LSEQIHRLLL). Disordered stretches follow at residues 503–544 (SSSP…PAPV) and 643–694 (TKRK…KEPV). Composition is skewed to low complexity over residues 523 to 533 (SPGSSSDSNGG) and 648 to 658 (ASSSSCTASSA). The tract at residues 592–811 (ELEVVPMPNQ…GLDSSSATPS (220 aa)) is required for phosphorylation by CSNK1E. Ser657, Ser659, Ser700, and Ser811 each carry phosphoserine. Disordered stretches follow at residues 802–867 (GLDS…PPST) and 931–1030 (LSQA…DALS). The short motif at 820-836 (VPPGRRHHCRSKAKRSR) is the Nuclear localization signal element. Residues 823-840 (GRRHHCRSKAKRSRHHHT) show a composition bias toward basic residues. Residues 853–867 (SPVPPSGPWPPPPST) show a composition bias toward pro residues. Over residues 943 to 954 (ASHSPSPSLTPL) the composition is skewed to low complexity. Residues 967–979 (FNSRCSSPLQLNL) are compositionally biased toward polar residues. 2 positions are modified to phosphoserine: Ser972 and Ser973. A Nuclear export signal 3 motif is present at residues 975–982 (LQLNLLQL). An LXXLL motif is present at residues 1036-1040 (LELLL). The segment covering 1045-1055 (RSGTGSAASGS) has biased composition (low complexity). Disordered regions lie at residues 1045–1091 (RSGT…SKYF) and 1202–1285 (IQDP…NSTS). Residues 1056–1070 (LGSGLGSGSGSGSHE) show a composition bias toward gly residues. A compositionally biased stretch (low complexity) spans 1071–1088 (GGSTSASITRSSQSSHTS). Positions 1142–1285 (SRDRASVLKQ…ALPAEENSTS (144 aa)) are CRY binding domain. A compositionally biased stretch (gly residues) spans 1229-1241 (GEGGGGGGGGGEG). Positions 1269–1285 (GGSSSSPALPAEENSTS) are enriched in polar residues.

In terms of assembly, homodimer. Component of the circadian core oscillator, which includes the CRY proteins, CLOCK or NPAS2, BMAL1 or BMAL2, CSNK1D and/or CSNK1E, TIMELESS, and the PER proteins. Interacts directly with TIMELESS, PER2, PER3, CRY1 and CRY2. Interacts with BMAL1 and CLOCK. Interacts with GPRASP1. Interacts (phosphorylated) with BTRC and FBXW11; the interactions trigger proteasomal degradation. Interacts with NONO, WDR5 and SFPQ. Interacts with USP2. Interacts with HNF4A. Post-translationally, phosphorylated on serine residues by CSNK1D, CSNK1E and probably also by CSNK1G2. Phosphorylation by CSNK1D or CSNK1E promotes nuclear location of PER proteins as well as ubiquitination and subsequent degradation. May be dephosphorylated by PP1. Ubiquitinated; requires phosphorylation by CSNK1E and interaction with BTRC and FBXW11. Deubiquitinated by USP2. Expressed in the brain, mainly in the suprachiasmatic nucleus (SCN). Expression also found in the harderian gland, lung, eye, intestine, liver and skeletal muscle.

It is found in the nucleus. The protein localises to the cytoplasm. Transcriptional repressor which forms a core component of the circadian clock. The circadian clock, an internal time-keeping system, regulates various physiological processes through the generation of approximately 24 hour circadian rhythms in gene expression, which are translated into rhythms in metabolism and behavior. It is derived from the Latin roots 'circa' (about) and 'diem' (day) and acts as an important regulator of a wide array of physiological functions including metabolism, sleep, body temperature, blood pressure, endocrine, immune, cardiovascular, and renal function. Consists of two major components: the central clock, residing in the suprachiasmatic nucleus (SCN) of the brain, and the peripheral clocks that are present in nearly every tissue and organ system. Both the central and peripheral clocks can be reset by environmental cues, also known as Zeitgebers (German for 'timegivers'). The predominant Zeitgeber for the central clock is light, which is sensed by retina and signals directly to the SCN. The central clock entrains the peripheral clocks through neuronal and hormonal signals, body temperature and feeding-related cues, aligning all clocks with the external light/dark cycle. Circadian rhythms allow an organism to achieve temporal homeostasis with its environment at the molecular level by regulating gene expression to create a peak of protein expression once every 24 hours to control when a particular physiological process is most active with respect to the solar day. Transcription and translation of core clock components (CLOCK, NPAS2, BMAL1, BMAL2, PER1, PER2, PER3, CRY1 and CRY2) plays a critical role in rhythm generation, whereas delays imposed by post-translational modifications (PTMs) are important for determining the period (tau) of the rhythms (tau refers to the period of a rhythm and is the length, in time, of one complete cycle). A diurnal rhythm is synchronized with the day/night cycle, while the ultradian and infradian rhythms have a period shorter and longer than 24 hours, respectively. Disruptions in the circadian rhythms contribute to the pathology of cardiovascular diseases, cancer, metabolic syndromes and aging. A transcription/translation feedback loop (TTFL) forms the core of the molecular circadian clock mechanism. Transcription factors, CLOCK or NPAS2 and BMAL1 or BMAL2, form the positive limb of the feedback loop, act in the form of a heterodimer and activate the transcription of core clock genes and clock-controlled genes (involved in key metabolic processes), harboring E-box elements (5'-CACGTG-3') within their promoters. The core clock genes: PER1/2/3 and CRY1/2 which are transcriptional repressors form the negative limb of the feedback loop and interact with the CLOCK|NPAS2-BMAL1|BMAL2 heterodimer inhibiting its activity and thereby negatively regulating their own expression. This heterodimer also activates nuclear receptors NR1D1/2 and RORA/B/G, which form a second feedback loop and which activate and repress BMAL1 transcription, respectively. Regulates circadian target genes expression at post-transcriptional levels, but may not be required for the repression at transcriptional level. Controls PER2 protein decay. Represses CRY2 preventing its repression on CLOCK/BMAL1 target genes such as FXYD5 and SCNN1A in kidney and PPARA in liver. Besides its involvement in the maintenance of the circadian clock, has an important function in the regulation of several processes. Participates in the repression of glucocorticoid receptor NR3C1/GR-induced transcriptional activity by reducing the association of NR3C1/GR to glucocorticoid response elements (GREs) by BMAL1:CLOCK. Plays a role in the modulation of the neuroinflammatory state via the regulation of inflammatory mediators release, such as CCL2 and IL6. In spinal astrocytes, negatively regulates the MAPK14/p38 and MAPK8/JNK MAPK cascades as well as the subsequent activation of NFkappaB. Coordinately regulates the expression of multiple genes that are involved in the regulation of renal sodium reabsorption. Can act as gene expression activator in a gene and tissue specific manner, in kidney enhances WNK1 and SLC12A3 expression in collaboration with CLOCK. Modulates hair follicle cycling. Represses the CLOCK-BMAL1 induced transcription of BHLHE40/DEC1. The chain is Period circadian protein homolog 1 (PER1) from Spalax judaei (Judean Mountains blind mole rat).